A 378-amino-acid chain; its full sequence is Probable selenide, water dikinase (378 aa).

The active site involves Cys-33. Residues Lys-36, 63-65, Asp-83, Asp-106, and 158-160 contribute to the ATP site; these read GLD and GQT. Asp-65 contributes to the Mg(2+) binding site. Asp-106 provides a ligand contact to Mg(2+). Asp-260 is a binding site for Mg(2+).

Belongs to the selenophosphate synthase 1 family. Class I subfamily. As to quaternary structure, homodimer. Mg(2+) serves as cofactor.

It catalyses the reaction hydrogenselenide + ATP + H2O = selenophosphate + AMP + phosphate + 2 H(+). Its function is as follows. Synthesizes selenophosphate from selenide and ATP. The sequence is that of Probable selenide, water dikinase (seld-1) from Caenorhabditis elegans.